The primary structure comprises 369 residues: Homoserine O-succinyltransferase (369 aa).

Residues glycine 90 to alanine 93 are important for substrate specificity. In terms of domain architecture, AB hydrolase-1 spans tryptophan 107–aspartate 353. Serine 175 functions as the Nucleophile in the catalytic mechanism. Substrate is bound at residue arginine 236. Active-site residues include aspartate 316 and histidine 346. Position 347 (aspartate 347) interacts with substrate.

It belongs to the AB hydrolase superfamily. MetX family. As to quaternary structure, homodimer.

It is found in the cytoplasm. The catalysed reaction is L-homoserine + succinyl-CoA = O-succinyl-L-homoserine + CoA. Its pathway is amino-acid biosynthesis; L-methionine biosynthesis via de novo pathway; O-succinyl-L-homoserine from L-homoserine: step 1/1. Transfers a succinyl group from succinyl-CoA to L-homoserine, forming succinyl-L-homoserine. This chain is Homoserine O-succinyltransferase, found in Brevundimonas diminuta (strain ATCC 11568 / DSM 7234 / NBRC 12697 / NCIMB 9393 / NCTC 8545).